Reading from the N-terminus, the 131-residue chain is MYTILLIGIGGFIGAVLRYSLSGWVQNSFVNFPLGTLVVNIVGSFFLGLVMYLSEYQGLFSEETRILLTIGLLGAFTTLSTFSYESFRLLESSKLMQLTMNIVATVLFSIFAVYLGKISALNLAAYLRGIK.

4 helical membrane passes run 4-24 (ILLIGIGGFIGAVLRYSLSGW), 32-52 (FPLGTLVVNIVGSFFLGLVMY), 66-86 (ILLTIGLLGAFTTLSTFSYES), and 95-115 (LMQLTMNIVATVLFSIFAVYL). Na(+)-binding residues include Gly-74 and Thr-77.

Belongs to the fluoride channel Fluc/FEX (TC 1.A.43) family.

The protein resides in the cell membrane. It catalyses the reaction fluoride(in) = fluoride(out). Na(+) is not transported, but it plays an essential structural role and its presence is essential for fluoride channel function. Functionally, fluoride-specific ion channel. Important for reducing fluoride concentration in the cell, thus reducing its toxicity. The sequence is that of Fluoride-specific ion channel FluC 1 from Methanosarcina acetivorans (strain ATCC 35395 / DSM 2834 / JCM 12185 / C2A).